The sequence spans 450 residues: MSLPGLNFSTTETNTTESTHTIDLKPETEWRYEVAIGGTLHVTLKSGTAEIFGTELPPNKELSIQGKGSIYTWQGCQFVYTAIAGPKGLMSDYTTEDTPHMTMAINLHFALEKMRNEAEQKPKDVAGPRVLIAGPPNSGKTSLAKILLAYATKCDRKPIYISLDPTSVNLGPPGGVHAVQITDLLDVETYGGFGSSEISGPQKLQPLILLSKYFGLEKTTDNFKLFKRSVAQLAVPVLSKLAHDVEAQKSGLIIDTPRVPGNQNKTIEVNLLTDVVSDFGVNVIVVIGNDRLYADLMKKYPVGASGPTVVKVPAFACMDDDESYNRDAQQQEIQQYFYGDAKDMKLGPRIVTVDFSTLHVYKIKPSTQFDDDKADMLERVAEANILPNTVLTVMHAVPGSSEKEILDSEVQGYLHVTEVDEEKNKVKILTPVPGRLPSQVMLLGDTRYHE.

ATP is bound by residues E29, K67, and 137-142 (NSGKTS).

Belongs to the Clp1 family. Clp1 subfamily. Component of a pre-mRNA cleavage factor complex. Interacts directly with PCF11.

Its subcellular location is the nucleus. Required for endonucleolytic cleavage during polyadenylation-dependent pre-mRNA 3'-end formation. This is mRNA cleavage and polyadenylation factor CLP1 from Yarrowia lipolytica (strain CLIB 122 / E 150) (Yeast).